The primary structure comprises 497 residues: MGLEALVPLAVIVTIFLLLVDLMHRRQRWAARYPPGPLPLPGLGNLLHVDFQNTPYCFDQLRRRFGDVFSLQLAWTPVVVLNGLAAVREALVTHGEDTADRPPVPITQILGFGPRSQGVFLARYGPAWREQRRFSVSTLRNLGLGKKSLEQWVTEEAACLCAAFANHSGRPFRPNGLLDKAVSNVIASLTCGRRFEYDDPRFLRLLDLAQEGLKEESGFLREVLNAIPVLLHIPALAGKVLRFQKAFLTQLDELLTEHRMTWDPAQPPRDLTEAFLAEMEKAKGNPESSFNDENLRIVVADLFSAGIVTTSTTLAWGLLLMILHPDVQRRVQQEIDDVIGQVRRPEMGDQARMPYTTAVIHEVQRFGDIVPLGVTHMTSRDIEVQGFRIPKGTTLFTNLSSVLKDKAVWEKPFRFHPEHFLDAQGHFVKPEAFLPFSAGRRACLGEPLARMELFLFFTSLLQHFSFSVPTGQPRPSHHGVFAFLVTPSPYELCAVPR.

Asp301 is a substrate binding site. Residue Cys443 coordinates heme.

This sequence belongs to the cytochrome P450 family. Requires heme as cofactor.

Its subcellular location is the endoplasmic reticulum membrane. It localises to the microsome membrane. The catalysed reaction is (5Z,8Z,11Z,14Z)-eicosatetraenoate + reduced [NADPH--hemoprotein reductase] + O2 = (8R,9S)-epoxy-(5Z,11Z,14Z)-eicosatrienoate + oxidized [NADPH--hemoprotein reductase] + H2O + H(+). It catalyses the reaction (5Z,8Z,11Z,14Z)-eicosatetraenoate + reduced [NADPH--hemoprotein reductase] + O2 = (11R,12S)-epoxy-(5Z,8Z,14Z)-eicosatrienoate + oxidized [NADPH--hemoprotein reductase] + H2O + H(+). The enzyme catalyses (5Z,8Z,11Z,14Z)-eicosatetraenoate + reduced [NADPH--hemoprotein reductase] + O2 = (14S,15R)-epoxy-(5Z,8Z,11Z)-eicosatrienoate + oxidized [NADPH--hemoprotein reductase] + H2O + H(+). It carries out the reaction N-(5Z,8Z,11Z,14Z-eicosatetraenoyl)-ethanolamine + reduced [NADPH--hemoprotein reductase] + O2 = N-(8,9-epoxy-5Z,11Z,14Z-eicosatrienoyl)-ethanolamine + oxidized [NADPH--hemoprotein reductase] + H2O + H(+). The catalysed reaction is N-(5Z,8Z,11Z,14Z-eicosatetraenoyl)-ethanolamine + reduced [NADPH--hemoprotein reductase] + O2 = N-(11,12-epoxy-5Z,8Z,14Z-eicosatrienoyl)-ethanolamine + oxidized [NADPH--hemoprotein reductase] + H2O + H(+). It catalyses the reaction N-(5Z,8Z,11Z,14Z-eicosatetraenoyl)-ethanolamine + reduced [NADPH--hemoprotein reductase] + O2 = N-(14,15-epoxy-5Z,8Z,11Z-eicosatrienoyl)-ethanolamine + oxidized [NADPH--hemoprotein reductase] + H2O + H(+). The enzyme catalyses N-(5Z,8Z,11Z,14Z-eicosatetraenoyl)-ethanolamine + reduced [NADPH--hemoprotein reductase] + O2 = N-(20-hydroxy-5Z,8Z,11Z,14Z-eicosatetraenoyl)-ethanolamine + oxidized [NADPH--hemoprotein reductase] + H2O + H(+). It carries out the reaction (5Z,8Z,11Z,14Z,17Z)-eicosapentaenoate + reduced [NADPH--hemoprotein reductase] + O2 = (17S,18R)-epoxy-(5Z,8Z,11Z,14Z)-eicosatetraenoate + oxidized [NADPH--hemoprotein reductase] + H2O + H(+). The catalysed reaction is (4Z,7Z,10Z,13Z,16Z,19Z)-docosahexaenoate + reduced [NADPH--hemoprotein reductase] + O2 = (19R,20S)-epoxy-(4Z,7Z,10Z,13Z,16Z)-docosapentaenoate + oxidized [NADPH--hemoprotein reductase] + H2O + H(+). It catalyses the reaction (4Z,7Z,10Z,13Z,16Z,19Z)-docosahexaenoate + reduced [NADPH--hemoprotein reductase] + O2 = (19S,20R)-epoxy-(4Z,7Z,10Z,13Z,16Z)-docosapentaenoate + oxidized [NADPH--hemoprotein reductase] + H2O + H(+). The enzyme catalyses cholesterol + reduced [NADPH--hemoprotein reductase] + O2 = 25-hydroxycholesterol + oxidized [NADPH--hemoprotein reductase] + H2O + H(+). It carries out the reaction all-trans-retinol + reduced [NADPH--hemoprotein reductase] + O2 = all-trans-retinal + oxidized [NADPH--hemoprotein reductase] + 2 H2O + H(+). It participates in cofactor metabolism; retinol metabolism. It functions in the pathway lipid metabolism; fatty acid metabolism. The protein operates within steroid metabolism; cholesterol metabolism. In terms of biological role, a cytochrome P450 monooxygenase involved in the metabolism of fatty acids, steroids and retinoids. Mechanistically, uses molecular oxygen inserting one oxygen atom into a substrate, and reducing the second into a water molecule, with two electrons provided by NADPH via cytochrome P450 reductase (NADPH--hemoprotein reductase). Catalyzes the epoxidation of double bonds of polyunsaturated fatty acids (PUFA). Metabolizes endocannabinoid arachidonoylethanolamide (anandamide) to 20-hydroxyeicosatetraenoic acid ethanolamide (20-HETE-EA) and 8,9-, 11,12-, and 14,15-epoxyeicosatrienoic acid ethanolamides (EpETrE-EAs), potentially modulating endocannabinoid system signaling. Catalyzes the hydroxylation of carbon-hydrogen bonds. Metabolizes cholesterol toward 25-hydroxycholesterol, a physiological regulator of cellular cholesterol homeostasis. Catalyzes the oxidative transformations of all-trans retinol to all-trans retinal, a precursor for the active form all-trans-retinoic acid. Also involved in the oxidative metabolism of drugs such as antiarrhythmics, adrenoceptor antagonists, and tricyclic antidepressants. The protein is Cytochrome P450 2D6 (CYP2D6) of Pan troglodytes (Chimpanzee).